An 86-amino-acid polypeptide reads, in one-letter code: BaSO(4)-adsorbing protein 1 (86 aa).

3 disulfides stabilise this stretch: C6/C22, C18/C49, and C39/C54. The tract at residues 58–86 (GDSASNTQNQGGSRRQENEDQGDDEWDRK) is disordered. Over residues 59–70 (DSASNTQNQGGS) the composition is skewed to polar residues. The span at 76-86 (EDQGDDEWDRK) shows a compositional bias: acidic residues.

In terms of tissue distribution, salivary gland (at protein level).

Its subcellular location is the secreted. In terms of biological role, inhibits lectin and classical pathways of complement system activation in the host with no significant effect on the alternative pathway. Inhibits host extrinsic blood coagulation pathway but not the intrinsic cascade. Binds to neutral and negatively charged membranes in vitro; binding is reduced upon pre-incubation with Ca(2+). This Ornithodoros savignyi (African eyed tampan) protein is BaSO(4)-adsorbing protein 1.